Here is a 305-residue protein sequence, read N- to C-terminus: Ribonucleoside-diphosphate reductase small subunit (305 aa).

Fe cation-binding residues include Glu-64, Glu-94, and His-97. Residue Tyr-101 is part of the active site. A helical membrane pass occupies residues 150 to 170 (ILLFLLVEGIFFISSFFSIGL). 3 residues coordinate Fe cation: Glu-157, Glu-191, and His-194.

It belongs to the ribonucleoside diphosphate reductase small chain family. As to quaternary structure, heterotetramer composed of a homodimer of the large subunit (R1) and a homodimer of the small subunit (R2). Larger multisubunit protein complex are also active, composed of (R1)n(R2)n. It depends on Fe cation as a cofactor.

Its subcellular location is the host membrane. The enzyme catalyses a 2'-deoxyribonucleoside 5'-diphosphate + [thioredoxin]-disulfide + H2O = a ribonucleoside 5'-diphosphate + [thioredoxin]-dithiol. Ribonucleoside-diphosphate reductase holoenzyme provides the precursors necessary for viral DNA synthesis. Allows virus growth in non-dividing cells, as well as reactivation from latency in infected hosts. Catalyzes the biosynthesis of deoxyribonucleotides from the corresponding ribonucleotides. The protein is Ribonucleoside-diphosphate reductase small subunit of Saimiri sciureus (Common squirrel monkey).